The primary structure comprises 1704 residues: Phospholipid-transporting ATPase ABCA3 (1704 aa).

A glycan (N-linked (GlcNAc...) asparagine) is linked at Asn14. A helical membrane pass occupies residues 22-42; the sequence is VLVTVLELFLPLLFSGILIWL. N-linked (GlcNAc...) asparagine glycans are attached at residues Asn53, Asn124, Asn140, and Asn228. Transmembrane regions (helical) follow at residues 251–271, 307–327, 344–364, 373–393, and 405–425; these read ISDP…MLSF, AWFL…TLLF, SLVL…SFMV, MAAT…FFVA, and LLSC…IGKF. In terms of domain architecture, ABC transporter 1 spans 530–763; the sequence is IKIKHLSKVF…YGAGYHMTLV (234 aa). 566–573 contacts ATP; that stretch reads GHNGAGKT. Residues Asn620 and Asn945 are each glycosylated (N-linked (GlcNAc...) asparagine). A run of 6 helical transmembrane segments spans residues 1100–1120, 1144–1164, 1183–1203, 1213–1233, 1245–1265, and 1310–1330; these read IALN…ILAV, SALL…LVVF, LLLM…SFFF, LTIF…IMRI, LDHV…SNFY, and MAAS…NLLW. The N-linked (GlcNAc...) asparagine glycan is linked to Asn1350. The 234-residue stretch at 1381-1614 folds into the ABC transporter 2 domain; it reads LIINELSKVY…FGSGYSLQAK (234 aa). 1416 to 1423 is a binding site for ATP; the sequence is GFNGAGKT.

In terms of assembly, homooligomer; disulfide-linked. In terms of processing, N-glycosylated. Localization at intracellular vesicles is accompanied by processing of oligosaccharide from high mannose type to complex type. N-linked glycosylation at Asn-124 and Asn-140 is required for stability and efficient anterograde trafficking and prevents from proteasomal degradation. Post-translationally, proteolytically cleaved by CTSL and to a lower extent by CTSB within multivesicular bodies (MVB) and lamellar bodies (LB) leading to a mature form of 150 kDa. Highly expressed in lung, moderately expressed in stomach, intestine, and kidney and weakly expressed in thyroid, brain, liver, spleen, heart, testis, and thymus.

It is found in the endosome. The protein resides in the multivesicular body membrane. The protein localises to the cytoplasmic vesicle membrane. Its subcellular location is the late endosome membrane. It localises to the lysosome membrane. It carries out the reaction ATP + H2O + xenobioticSide 1 = ADP + phosphate + xenobioticSide 2.. The catalysed reaction is a 1,2-diacyl-sn-glycero-3-phosphocholine(in) + ATP + H2O = a 1,2-diacyl-sn-glycero-3-phosphocholine(out) + ADP + phosphate + H(+). It catalyses the reaction ATP + H2O + phospholipidSide 1 = ADP + phosphate + phospholipidSide 2.. The enzyme catalyses 1,2-dihexadecanoyl-sn-glycero-3-phosphocholine(in) + ATP + H2O = 1,2-dihexadecanoyl-sn-glycero-3-phosphocholine(out) + ADP + phosphate + H(+). It carries out the reaction cholesterol(in) + ATP + H2O = cholesterol(out) + ADP + phosphate + H(+). The catalysed reaction is a 1,2-diacyl-sn-glycero-3-phospho-(1'-sn-glycerol)(in) + ATP + H2O = a 1,2-diacyl-sn-glycero-3-phospho-(1'-sn-glycerol)(out) + ADP + phosphate + H(+). Its function is as follows. Catalyzes the ATP-dependent transport of phospholipids such as phosphatidylcholine and phosphoglycerol from the cytoplasm into the lumen side of lamellar bodies, in turn participates in the lamellar bodies biogenesis and homeostasis of pulmonary surfactant. Transports preferentially phosphatidylcholine containing short acyl chains. In addition plays a role as an efflux transporter of miltefosine across macrophage membranes and free cholesterol (FC) through intralumenal vesicles by removing FC from the cell as a component of surfactant and protects cells from free cholesterol toxicity. This chain is Phospholipid-transporting ATPase ABCA3, found in Rattus norvegicus (Rat).